The primary structure comprises 154 residues: AP-1 complex subunit sigma-3 (154 aa).

It belongs to the adaptor complexes small subunit family. In terms of assembly, adaptor protein complex 1 (AP-1) is a heterotetramer composed of two large adaptins (gamma-type subunit AP1G1 and beta-type subunit AP1B1), a medium adaptin (mu-type subunit AP1M1 or AP1M2) and a small adaptin (sigma-type subunit AP1S1 or AP1S2 or AP1S3). Widely expressed.

The protein localises to the golgi apparatus. It is found in the cytoplasmic vesicle membrane. It localises to the membrane. The protein resides in the clathrin-coated pit. Its function is as follows. Subunit of clathrin-associated adaptor protein complex 1 that plays a role in protein sorting in the late-Golgi/trans-Golgi network (TGN) and/or endosomes. The AP complexes mediate both the recruitment of clathrin to membranes and the recognition of sorting signals within the cytosolic tails of transmembrane cargo molecules. Involved in TLR3 trafficking. The chain is AP-1 complex subunit sigma-3 (AP1S3) from Homo sapiens (Human).